A 131-amino-acid chain; its full sequence is Nitrogenase-stabilizing/protective protein NifW (131 aa).

The protein belongs to the NifW family. In terms of assembly, homotrimer; associates with NifD.

May protect the nitrogenase Fe-Mo protein from oxidative damage. The sequence is that of Nitrogenase-stabilizing/protective protein NifW from Frankia alni (strain DSM 45986 / CECT 9034 / ACN14a).